Here is a 692-residue protein sequence, read N- to C-terminus: Formate hydrogenlyase transcriptional activator (692 aa).

The GAF domain occupies 202 to 344 (DIDELVSEVA…QIAERVAIAV (143 aa)). The 230-residue stretch at 381–610 (IIGRSEAMYN…LENVVERAVL (230 aa)) folds into the Sigma-54 factor interaction domain. ATP-binding positions include 409–416 (GETGTGKE) and 472–481 (ADKSSLFLDE). Positions 663-682 (PKGAAQRLGLKRTTLLSRMK) form a DNA-binding region, H-T-H motif.

Its function is as follows. Required for induction of expression of the formate dehydrogenase H and hydrogenase-3 structural genes. This is Formate hydrogenlyase transcriptional activator (fhlA) from Salmonella typhimurium (strain SL1344).